A 124-amino-acid chain; its full sequence is Large ribosomal subunit protein uL18 (124 aa).

The protein belongs to the universal ribosomal protein uL18 family. Part of the 50S ribosomal subunit; part of the 5S rRNA/L5/L18/L25 subcomplex. Contacts the 5S and 23S rRNAs.

In terms of biological role, this is one of the proteins that bind and probably mediate the attachment of the 5S RNA into the large ribosomal subunit, where it forms part of the central protuberance. The protein is Large ribosomal subunit protein uL18 of Frankia casuarinae (strain DSM 45818 / CECT 9043 / HFP020203 / CcI3).